The sequence spans 426 residues: Serine--tRNA ligase (426 aa).

The tract at residues 37-63 (RKSVQTRTEQLQAERNARSKSIGQAKA) is disordered. 233–235 (TAE) serves as a coordination point for L-serine. 264–266 (RSE) contacts ATP. L-serine is bound at residue Glu287. 351–354 (EISS) provides a ligand contact to ATP. Ser387 lines the L-serine pocket.

The protein belongs to the class-II aminoacyl-tRNA synthetase family. Type-1 seryl-tRNA synthetase subfamily. Homodimer. The tRNA molecule binds across the dimer.

It is found in the cytoplasm. The enzyme catalyses tRNA(Ser) + L-serine + ATP = L-seryl-tRNA(Ser) + AMP + diphosphate + H(+). It catalyses the reaction tRNA(Sec) + L-serine + ATP = L-seryl-tRNA(Sec) + AMP + diphosphate + H(+). The protein operates within aminoacyl-tRNA biosynthesis; selenocysteinyl-tRNA(Sec) biosynthesis; L-seryl-tRNA(Sec) from L-serine and tRNA(Sec): step 1/1. Catalyzes the attachment of serine to tRNA(Ser). Is also able to aminoacylate tRNA(Sec) with serine, to form the misacylated tRNA L-seryl-tRNA(Sec), which will be further converted into selenocysteinyl-tRNA(Sec). In Pseudomonas entomophila (strain L48), this protein is Serine--tRNA ligase.